We begin with the raw amino-acid sequence, 453 residues long: G-protein coupled receptor 39 (453 aa).

Residues 1-34 (MASPSLPGSDCSQIIDHSHVPEFEVATWIKITLI) are Extracellular-facing. 2 disulfide bridges follow: Cys-11/Cys-191 and Cys-108/Cys-210. Residues His-17 and His-19 each contribute to the Zn(2+) site. Residues 35 to 55 (LVYLIIFVMGLLGNSATIRVT) form a helical membrane-spanning segment. The Cytoplasmic portion of the chain corresponds to 56–69 (QVLQKKGYLQKEVT). Residues 70–89 (DHMVSLACSDILVFLIGMPM) traverse the membrane as a helical segment. Residues 90 to 109 (EFYSIIWNPLTTSSYTLSCK) are Extracellular-facing. A helical membrane pass occupies residues 110–131 (LHTFLFEACSYATLLHVLTLSF). Topologically, residues 132 to 151 (ERYIAICHPFRYKAVSGPCQ) are cytoplasmic. A helical transmembrane segment spans residues 152-172 (VKLLIGFVWVTSALVALPLLF). Residues 173–217 (AMGTEYPLVNVPSHRGLTCNRSSTRHHEQPETSNMSICTNLSSRW) lie on the Extracellular side of the membrane. Asn-192, Asn-206, and Asn-212 each carry an N-linked (GlcNAc...) asparagine glycan. A helical transmembrane segment spans residues 218-242 (TVFQSSIFGAFVVYLVVLLSVAFMC). Residues 243–283 (WNMMQVLMKSQKGSLAGGTRPPQLRKSESEESRTARRQTII) are Cytoplasmic-facing. Positions 255–274 (GSLAGGTRPPQLRKSESEES) are disordered. Residues 284-305 (FLRLIVVTLAVCWMPNQIRRIM) form a helical membrane-spanning segment. Residues 306 to 323 (AAAKPKHDWTRSYFRAYM) are Extracellular-facing. A helical transmembrane segment spans residues 324 to 344 (ILLPFSETFFYLSSVINPLLY). The Cytoplasmic segment spans residues 345-453 (TVSSQQFRRV…AENGFQEHEV (109 aa)). A Phosphoserine modification is found at Ser-396. Residues 415-453 (SEAEPQSKSQSLSLESLEPNSGAKPANSAAENGFQEHEV) form a disordered region. Residues 418–435 (EPQSKSQSLSLESLEPNS) are compositionally biased toward low complexity.

It belongs to the G-protein coupled receptor 1 family. As to quaternary structure, interacts with HTR1A. Interacts with GALR1. In terms of tissue distribution, expressed in many tissues, including the stomach, intestine and hypothalamus.

The protein resides in the cell membrane. Functionally, zinc-sensing receptor that can sense changes in extracellular Zn(2+), mediate Zn(2+) signal transmission, and participates in the regulation of numerous physiological processes including glucose homeostasis regulation, gastrointestinal mobility, hormone secretion and cell death. Activation by Zn(2+) in keratinocytes increases the intracellular concentration of Ca(2+) and activates the ERK/MAPK and PI3K/AKT signaling pathways leading to epithelial repair. Plays an essential role in normal wound healing by inducing the production of cytokines including the major inflammatory cytokine IL6 via the PKC/MAPK/CEBPB pathway. Regulates adipose tissue metabolism, especially lipolysis, and regulates the function of lipases, such as hormone-sensitive lipase and adipose triglyceride lipase. Plays a role in the inhibition of cell death and protects against oxidative, endoplasmic reticulum and mitochondrial stress by inducing secretion of the cytoprotective pigment epithelium-derived growth factor (PEDF) and probably other protective transcripts in a GNA13/RHOA/SRE-dependent manner. Forms dynamic heteroreceptor complexes with HTR1A and GALR1 depending on cell type or specific physiological states, resulting in signaling diversity: HTR1A-GPR39 shows additive increase in signaling along the serum response element (SRE) and NF-kappa-B pathways while GALR1 acts as an antagonist blocking SRE. The polypeptide is G-protein coupled receptor 39 (GPR39) (Homo sapiens (Human)).